The sequence spans 91 residues: Transcription factor ILI3 (91 aa).

One can recognise a bHLH domain in the interval serine 3–leucine 58.

Belongs to the bHLH protein family.

Atypical and probable non DNA-binding bHLH transcription that integrates multiple signaling pathways to regulate cell elongation and plant development. The sequence is that of Transcription factor ILI3 (ILI3) from Oryza sativa subsp. indica (Rice).